A 141-amino-acid polypeptide reads, in one-letter code: Hemoglobin subunit alpha (141 aa).

The 141-residue stretch at 1–141 folds into the Globin domain; it reads VLSSKDKANI…VSTVLTSKYR (141 aa). Residue serine 3 is modified to Phosphoserine. An N6-succinyllysine mark is found at lysine 7 and lysine 11. The residue at position 16 (lysine 16) is an N6-acetyllysine; alternate. The residue at position 16 (lysine 16) is an N6-succinyllysine; alternate. Tyrosine 24 is subject to Phosphotyrosine. The residue at position 40 (lysine 40) is an N6-succinyllysine. Serine 49 carries the post-translational modification Phosphoserine. Position 58 (histidine 58) interacts with O2. A heme b-binding site is contributed by histidine 87. A Phosphoserine modification is found at serine 102. A Phosphothreonine modification is found at threonine 108. Phosphoserine is present on serine 124. 2 positions are modified to phosphothreonine: threonine 134 and threonine 137. A Phosphoserine modification is found at serine 138.

It belongs to the globin family. In terms of assembly, heterotetramer of two alpha chains and two beta chains. In terms of tissue distribution, red blood cells.

Involved in oxygen transport from the lung to the various peripheral tissues. Its function is as follows. Hemopressin acts as an antagonist peptide of the cannabinoid receptor CNR1. Hemopressin-binding efficiently blocks cannabinoid receptor CNR1 and subsequent signaling. In Lama glama (Llama), this protein is Hemoglobin subunit alpha (HBA).